A 182-amino-acid chain; its full sequence is Adenylate kinase (182 aa).

12 to 17 (GAGKGT) provides a ligand contact to ATP. Residues 32–61 (STGELLRKEIDLDTYLGKQVKDIMNKGELV) are NMP. Residues T33, R38, 59–61 (ELV), 85–88 (GYPR), and Q92 each bind AMP. An LID region spans residues 126–132 (LRGRKDD). R127 serves as a coordination point for ATP. R129 and R140 together coordinate AMP. ATP is bound at residue G168.

This sequence belongs to the adenylate kinase family. In terms of assembly, monomer.

It localises to the cytoplasm. It catalyses the reaction AMP + ATP = 2 ADP. It functions in the pathway purine metabolism; AMP biosynthesis via salvage pathway; AMP from ADP: step 1/1. Functionally, catalyzes the reversible transfer of the terminal phosphate group between ATP and AMP. Plays an important role in cellular energy homeostasis and in adenine nucleotide metabolism. This chain is Adenylate kinase, found in Prochlorococcus marinus (strain MIT 9515).